The primary structure comprises 147 residues: CLAVATA3/ESR (CLE)-related protein 4C (147 aa).

Residues methionine 1–alanine 21 form the signal peptide. The segment at alanine 21 to methionine 83 is required for secretion from the host cytoplasm to the host apoplasm. N-linked (GlcNAc...) asparagine glycosylation is present at asparagine 32. 2 disordered regions span residues glycine 57–proline 86 and arginine 116–histidine 147. Residues histidine 125 to valine 137 show a composition bias toward basic and acidic residues. The CLE motif lies at arginine 136–histidine 147.

The protein belongs to the CLV3/ESR signal peptide family. In terms of tissue distribution, highly expressed exclusively within the dorsal esophageal gland cell during syncytium formation in host plants.

Its subcellular location is the secreted. It localises to the host cytoplasm. It is found in the host extracellular space. The protein resides in the extracellular space. The protein localises to the apoplast. In terms of biological role, mimics host plant CLE extracellular signal peptides that regulate cell fate. May play a role in the differentiation or division of feeding cells (syncytia) induced in plant roots during infection. The protein is CLAVATA3/ESR (CLE)-related protein 4C (CLE-4C) of Globodera rostochiensis (Golden nematode worm).